Here is a 77-residue protein sequence, read N- to C-terminus: Small ribosomal subunit protein uS17 (77 aa).

It belongs to the universal ribosomal protein uS17 family. Part of the 30S ribosomal subunit.

Its function is as follows. One of the primary rRNA binding proteins, it binds specifically to the 5'-end of 16S ribosomal RNA. The protein is Small ribosomal subunit protein uS17 of Wolbachia sp. subsp. Brugia malayi (strain TRS).